The chain runs to 181 residues: Malignant T-cell-amplified sequence 1 (181 aa).

T81 is modified (phosphothreonine; by MAPK1 and MAPK3). The PUA domain maps to 92–171 (LPHQQVDKGA…IGIENIHYLN (80 aa)). S118 carries the post-translational modification Phosphoserine; by CDK1.

Belongs to the MCTS1 family. As to quaternary structure, interacts (via PUA domain) with DENR; the complex regulates translation reinitiation. In terms of processing, phosphorylation is critical for stabilization and promotion of cell proliferation. In terms of tissue distribution, ubiquitous. Over-expressed in T-cell lymphoid cell lines and in non-Hodgkin lymphoma cell lines as well as in a subset of primary large B-cell lymphomas.

The protein resides in the cytoplasm. Functionally, translation regulator forming a complex with DENR to promote translation reinitiation. Translation reinitiation is the process where the small ribosomal subunit remains attached to the mRNA following termination of translation of a regulatory upstream ORF (uORF), and resume scanning on the same mRNA molecule to initiate translation of a downstream ORF, usually the main ORF (mORF). The MCTS1/DENR complex is pivotal to two linked mechanisms essential for translation reinitiation. Firstly, the dissociation of deacylated tRNAs from post-termination 40S ribosomal complexes during ribosome recycling. Secondly, the recruitment in an EIF2-independent manner of aminoacylated initiator tRNA to P site of 40S ribosomes for a new round of translation. This regulatory mechanism governs the translation of more than 150 genes which translation reinitiation is MCTS1/DENR complex-dependent. Consequently, modulates various unrelated biological processes including cell cycle regulation and DNA damage signaling and repair. Notably, it positively regulates interferon gamma immunity to mycobacteria by enhancing the translation of JAK2. The sequence is that of Malignant T-cell-amplified sequence 1 (MCTS1) from Homo sapiens (Human).